The chain runs to 356 residues: Protein RecA (356 aa).

Position 77–84 (77–84 (GPESSGKT)) interacts with ATP.

This sequence belongs to the RecA family.

The protein localises to the cytoplasm. In terms of biological role, can catalyze the hydrolysis of ATP in the presence of single-stranded DNA, the ATP-dependent uptake of single-stranded DNA by duplex DNA, and the ATP-dependent hybridization of homologous single-stranded DNAs. It interacts with LexA causing its activation and leading to its autocatalytic cleavage. The chain is Protein RecA from Caulobacter vibrioides (strain ATCC 19089 / CIP 103742 / CB 15) (Caulobacter crescentus).